The sequence spans 220 residues: A-type ATP synthase subunit K (220 aa).

Helical transmembrane passes span 5-25, 63-83, 90-110, 125-145, 155-175, and 195-215; these read LILG…GSGI, FLVA…AMFA, LAGL…GAVA, LPET…VGVF, AALG…GQGI, and LVLA…AILI.

The protein belongs to the V-ATPase proteolipid subunit family. In terms of assembly, the A-type ATPase is composed of subunits A(3), B(3), C, D, E(1 or 2), F, H(2), I and K(x). Subunit K dimerizes and may form higher oligomers.

Its subcellular location is the cell membrane. Its function is as follows. Component of the A-type ATP synthase that produces ATP from ADP in the presence of a proton gradient across the membrane. The sequence is that of A-type ATP synthase subunit K from Methanocaldococcus jannaschii (strain ATCC 43067 / DSM 2661 / JAL-1 / JCM 10045 / NBRC 100440) (Methanococcus jannaschii).